Consider the following 181-residue polypeptide: MSFQEVWEKEPMKKPRIQKVTVNFGVGEAGDRLTIGAKVIEELTGQSPVRTLAKQTNPAFGIRKKLPIGLKVTLRGKNAEEFLGNAFSAFKTCGKVLYASSFDQVGNFSFGVPEHIDFPGQKYDPSIGIYGMDICVTFEKSGYRVKSRKVKRSHIPKKHLVTKDEAIEYIQAKFDTEVVRE.

The protein belongs to the universal ribosomal protein uL5 family. As to quaternary structure, part of the 50S ribosomal subunit; contacts the 5S rRNA and probably tRNA. Forms a bridge to the 30S subunit in the 70S ribosome.

Its function is as follows. This is one of the proteins that bind and probably mediate the attachment of the 5S RNA into the large ribosomal subunit, where it forms part of the central protuberance. In the 70S ribosome it contacts protein S13 of the 30S subunit (bridge B1b), connecting the 2 subunits; this bridge is implicated in subunit movement. May contact the P site tRNA; the 5S rRNA and some of its associated proteins might help stabilize positioning of ribosome-bound tRNAs. The sequence is that of Large ribosomal subunit protein uL5 from Methanococcus maripaludis (strain C7 / ATCC BAA-1331).